Here is an 855-residue protein sequence, read N- to C-terminus: MAIKSTEKHTPMMQQYLRLKSENPDILLFYRMGDFYELFYDDAKRASQLLEISLTKRGSSAGEPIPMAGLPYHAVEGYLAKLVQQGESVAICEQIGDPATSKGPVERKVVRIVTPGTVTDEALLPERFDNLIAAIYHHKGQFGYATLDITSGRFKVSEPSTEESMLAELQRTSPTELLFSEDFEPVHLLEKRNGNRRRPVWEFELDTAKQQLNQQFGTRDLVGFGVENAEFGLCAAGCLIQYVKDTQRTTLPHIRSIVMDRQDDSVILDAATRRNLEITQNLAGGFNHTLSEVLDHTSTAMGSRLLKRWLHQPIRTHDVLNQRLDAIGELKSNGLYAELSPQLKQIGDVERILARLALRSARPRDLARLRNALQQLPELAQSTQAFEQTHLLELASLAQPIDSICELLERAVKENPPVVIRDGGVLADGYNEELDQWRDLANGAALFLSKLEQEERERHDIDTLKVGYNNVHGFYIQISKGQSHKAPAHYVRRQTLKNAERYIIPELKAHEDKVLSSKSKALAIEKKLWEELFDQLLPHLEQLQLMANAISELDVLSNLAERADTLNYCRPTLSSDIGMKIEGGRHPVVEQVMSDPFIANPINLNDDRKMLIITGPNMGGKSTYMRQTALIALMAHVGCYVPADSAHIGLLDRIFTRIGASDDLASGRSTFMVEMTETANILHNATQHSLVLMDEIGRGTSTYDGLSLAWASAEWLATKINAMTLFATHYFELTELPNLFSGLANVHLDAVEHGDEIAFMHAVQEGAANKSYGLAVASLAGVPKAVIKKAKQKLQQLENGQPKNQSLTSTQIKQEHQLSLIPEPSEVEEALAKVNPDDLSPRQALEALYRLKALL.

An ATP-binding site is contributed by 615–622 (GPNMGGKS).

It belongs to the DNA mismatch repair MutS family.

Functionally, this protein is involved in the repair of mismatches in DNA. It is possible that it carries out the mismatch recognition step. This protein has a weak ATPase activity. The chain is DNA mismatch repair protein MutS from Aliivibrio salmonicida (strain LFI1238) (Vibrio salmonicida (strain LFI1238)).